Here is a 323-residue protein sequence, read N- to C-terminus: Ethanolamine-phosphate cytidylyltransferase (323 aa).

This sequence belongs to the cytidylyltransferase family.

Its subcellular location is the cytoplasm. The protein localises to the nucleus. The catalysed reaction is phosphoethanolamine + CTP + H(+) = CDP-ethanolamine + diphosphate. Its pathway is phospholipid metabolism; phosphatidylethanolamine biosynthesis; phosphatidylethanolamine from ethanolamine: step 2/3. Functionally, ethanolamine-phosphate cytidylyltransferase which catalyzes the second step of phosphatidylethanolamine biosynthesis. Involved in the maintenance of plasma membrane and required for proper sporulation. This is Ethanolamine-phosphate cytidylyltransferase from Saccharomyces cerevisiae (strain ATCC 204508 / S288c) (Baker's yeast).